Consider the following 463-residue polypeptide: Annexin A7 (463 aa).

Pro residues-rich tracts occupy residues 1-18 (MSYP…PGYP) and 26-38 (FPPP…PSGF). 2 disordered regions span residues 1 to 54 (MSYP…SSGY) and 71 to 153 (GYPG…THGT). The repeat-rich region stretch occupies residues 1-140 (MSYPGYPPTG…QYPGGQSPYP (140 aa)). A 3 X 5 AA tandem repeats of G-Y-P-P-X region spans residues 5-20 (GYPPTGYPPFPGYPPT). Residues 86–99 (GGQGFGAPPGGAGF) show a composition bias toward gly residues. Annexin repeat units follow at residues 160 to 231 (FDAM…ALFM), 232 to 303 (PSTY…SMCQ), 315 to 387 (QLAQ…TILQ), and 391 to 462 (NRPA…AIVG). K208 bears the N6-acetyllysine mark.

It belongs to the annexin family. Interacts with PDCD6.

Calcium/phospholipid-binding protein which promotes membrane fusion and is involved in exocytosis. In Bos taurus (Bovine), this protein is Annexin A7 (ANXA7).